A 154-amino-acid polypeptide reads, in one-letter code: Myoglobin (154 aa).

Positions G2–K148 constitute a Globin domain. S4 is subject to Phosphoserine. H65 is a nitrite binding site. H65 lines the O2 pocket. The residue at position 68 (T68) is a Phosphothreonine. H94 serves as a coordination point for heme b.

This sequence belongs to the globin family. In terms of assembly, monomeric.

Its subcellular location is the cytoplasm. It is found in the sarcoplasm. It catalyses the reaction Fe(III)-heme b-[protein] + nitric oxide + H2O = Fe(II)-heme b-[protein] + nitrite + 2 H(+). The enzyme catalyses H2O2 + AH2 = A + 2 H2O. In terms of biological role, monomeric heme protein which primary function is to store oxygen and facilitate its diffusion within muscle tissues. Reversibly binds oxygen through a pentacoordinated heme iron and enables its timely and efficient release as needed during periods of heightened demand. Depending on the oxidative conditions of tissues and cells, and in addition to its ability to bind oxygen, it also has a nitrite reductase activity whereby it regulates the production of bioactive nitric oxide. Under stress conditions, like hypoxia and anoxia, it also protects cells against reactive oxygen species thanks to its pseudoperoxidase activity. The chain is Myoglobin (MB) from Lagothrix lagotricha (Brown woolly monkey).